The primary structure comprises 234 residues: Small ribosomal subunit protein uS3 (234 aa).

One can recognise a KH type-2 domain in the interval 39 to 107; sequence IRKFLKKELY…EVSINIKEVK (69 aa).

Belongs to the universal ribosomal protein uS3 family. Part of the 30S ribosomal subunit. Forms a tight complex with proteins S10 and S14.

Functionally, binds the lower part of the 30S subunit head. Binds mRNA in the 70S ribosome, positioning it for translation. The polypeptide is Small ribosomal subunit protein uS3 (Helicobacter acinonychis (strain Sheeba)).